The chain runs to 142 residues: Transcriptional regulator MraZ (142 aa).

SpoVT-AbrB domains are found at residues 5-47 and 76-119; these read THSP…SERE and ASDE…DAQA.

Belongs to the MraZ family. Forms oligomers.

The protein localises to the cytoplasm. It localises to the nucleoid. The polypeptide is Transcriptional regulator MraZ (Arthrobacter sp. (strain FB24)).